A 366-amino-acid polypeptide reads, in one-letter code: Peptide chain release factor 2 (366 aa).

An N5-methylglutamine modification is found at Gln-251.

This sequence belongs to the prokaryotic/mitochondrial release factor family. Methylated by PrmC. Methylation increases the termination efficiency of RF2.

It is found in the cytoplasm. In terms of biological role, peptide chain release factor 2 directs the termination of translation in response to the peptide chain termination codons UGA and UAA. This Listeria innocua serovar 6a (strain ATCC BAA-680 / CLIP 11262) protein is Peptide chain release factor 2 (prfB).